The sequence spans 105 residues: uncharacterized protein (105 aa).

Residues 80-105 are disordered; that stretch reads TGGPTSSTCTRRSDLATGRGSDRRPD.

This is an uncharacterized protein from Micromonospora rosea.